Reading from the N-terminus, the 561-residue chain is PR domain zinc finger protein 14 (561 aa).

Residues 1–20 (MALPPSGETQSQDKANYLPQ) form a disordered region. The segment covering 7–20 (GETQSQDKANYLPQ) has biased composition (polar residues). The tract at residues 184 to 373 (GFNFTEEELS…GVPMNLRVTE (190 aa)) is interaction with CBFA2T2. Positions 241 to 356 (EGLCLMQTSF…RNQELLVWYG (116 aa)) constitute an SET domain. An S-adenosyl-L-methionine-binding site is contributed by Tyr-355. The C2H2-type 1; atypical zinc-finger motif lies at 390–416 (YRCERCGKVFTYKYYRDKHLKYTPCVD). C2H2-type zinc fingers lie at residues 422–445 (FPCSLCQRSFEKRDRLRIHILHVH), 451–473 (YLCSTCGKSFSQSSSLNKHMRVH), 479–501 (YQCVYCTKKFTASSILRTHIRQH), 507–530 (FKCKHCGKAFASHAAHDSHVRRSH), and 536–558 (SSCDICGKGFLDQEAFYAHMRLH).

It belongs to the class V-like SAM-binding methyltransferase superfamily. Interacts with CBFA2T2. As to expression, restricted to embryonic stem cells and primordial germ cells. Not detected in epiblast-derived stem cells.

The protein resides in the nucleus. In terms of biological role, transcription factor that has both positive and negative roles on transcription. Plays a role in cellular pluripotency. Essential for germ cell development at 2 levels: the reacquisition of potential pluripotency, including SOX2 up-regulation, and successful epigenetic reprogramming, characterized by EHMT1 repression. Its association with CBFA2T2 is required for the functions in pluripotency and germ cell formation. The chain is PR domain zinc finger protein 14 (Prdm14) from Mus musculus (Mouse).